The following is a 111-amino-acid chain: Large ribosomal subunit protein P2 (111 aa).

Residues 62 to 111 form a disordered region; that stretch reads LASVPSGGAGGAAAAGGAAAAGGAAEAAPEEAKEEEKEESDDDMGFGLFD. Low complexity predominate over residues 76 to 88; the sequence is AGGAAAAGGAAEA. Serine 101 is modified (phosphoserine).

Belongs to the eukaryotic ribosomal protein P1/P2 family. P1 and P2 exist as dimers at the large ribosomal subunit.

Plays an important role in the elongation step of protein synthesis. This chain is Large ribosomal subunit protein P2, found in Podospora anserina (Pleurage anserina).